The chain runs to 521 residues: Forkhead box protein N4 (521 aa).

A DNA-binding region (fork-head) is located at residues 197–293; it reads KPIYSYSCLI…EEMHKWKRKD (97 aa). Positions 371–406 are disordered; it reads PQAHLAPDSPAPAQTPPLHALPSLSPGPLPQPAMGR.

As to expression, mainly expressed in proliferator progenitor cells in brain and retina rather than differentiated cells. In contrast, is expressed only in postmitotic epithelial cells rather than in proliferative progenitors in the proximal airway.

Its subcellular location is the nucleus. Functionally, transcription factor essential for neural and some non-neural tissues development, such as retina and lung respectively. Binds to an 11-bp consensus sequence containing the invariant tetranucleotide 5'-ACGC-3'. During development of the central nervous system, is required to specify the amacrine and horizontal cell fates from multipotent retinal progenitors while suppressing the alternative photoreceptor cell fates through activating DLL4-NOTCH signaling. Also acts synergistically with ASCL1/MASH1 to activate DLL4-NOTCH signaling and drive commitment of p2 progenitors to the V2b interneuron fates during spinal cord neurogenesis. In development of non-neural tissues, plays an essential role in the specification of the atrioventricular canal and is indirectly required for patterning the distal airway during lung development. This is Forkhead box protein N4 (Foxn4) from Mus musculus (Mouse).